A 342-amino-acid chain; its full sequence is UDP-N-acetylenolpyruvoylglucosamine reductase (342 aa).

One can recognise an FAD-binding PCMH-type domain in the interval R17 to D192. The active site involves R168. The Proton donor role is filled by S242. Residue E338 is part of the active site.

The protein belongs to the MurB family. The cofactor is FAD.

The protein resides in the cytoplasm. The enzyme catalyses UDP-N-acetyl-alpha-D-muramate + NADP(+) = UDP-N-acetyl-3-O-(1-carboxyvinyl)-alpha-D-glucosamine + NADPH + H(+). The protein operates within cell wall biogenesis; peptidoglycan biosynthesis. Its function is as follows. Cell wall formation. The polypeptide is UDP-N-acetylenolpyruvoylglucosamine reductase (Ralstonia nicotianae (strain ATCC BAA-1114 / GMI1000) (Ralstonia solanacearum)).